A 670-amino-acid polypeptide reads, in one-letter code: Tyramine beta-hydroxylase (670 aa).

Residues 26 to 35 show a composition bias toward basic residues; the sequence is HHQLAYHHHK. A disordered region spans residues 26–63; it reads HHQLAYHHHKQEQQQQQQQQQQQQAKQKQKQNGVQQGR. Low complexity predominate over residues 38–61; the sequence is QQQQQQQQQQQQAKQKQKQNGVQQ. Residues 65–81 traverse the membrane as a helical segment; that stretch reads PTFMPVMLLLLMATLLT. Residues 104–220 form the DOMON domain; that stretch reads KEIKLSWMVD…GTMYVVWARG (117 aa). A glycan (N-linked (GlcNAc...) asparagine) is linked at Asn-235. Residue Tyr-281 is part of the active site. Cystine bridges form between Cys-283–Cys-334 and Cys-319–Cys-344. Cu(2+) is bound by residues His-312 and His-313. Residues His-382, His-461, His-463, and Met-536 each coordinate Cu(2+). 3 disulfides stabilise this stretch: Cys-439-Cys-552, Cys-443-Cys-613, and Cys-515-Cys-537. His-461 is an active-site residue. An N-linked (GlcNAc...) asparagine glycan is attached at Asn-614.

The protein belongs to the copper type II ascorbate-dependent monooxygenase family. In terms of assembly, is most likely a monomer under physiological conditions, although under conditions of high pH and low ionic strength the dimeric form predominates. Both forms are equally active. It depends on Cu(2+) as a cofactor. In terms of tissue distribution, present in head and in neurons innervating the oviduct (at protein level).

The protein localises to the membrane. The enzyme catalyses tyramine + L-ascorbate + O2 = (R)-octopamine + L-dehydroascorbate + H2O. Its function is as follows. Catalyzes the hydroxylation of tyramine into octopamine, a neurotransmitter involved in ovulation and locomotion. Functions in an amine-mediated Bacc-dependent signaling pathway that negatively regulates acute ethanol sensitivity. Involved in facilitation of nociceptive escape behavior in response to potentially damaging stimuli, such as high temperatures. This chain is Tyramine beta-hydroxylase (Tbh), found in Drosophila melanogaster (Fruit fly).